Consider the following 346-residue polypeptide: Propane 2-monooxygenase, reductase component (346 aa).

The 2Fe-2S ferredoxin-type domain maps to 5-94 (HKISFEPVDI…DCEIELLNFD (90 aa)). Cys39, Cys44, Cys46, and Cys78 together coordinate [2Fe-2S] cluster. Residues 104–205 (IQDVTTKVAA…NGPYGSCTLR (102 aa)) enclose the FAD-binding FR-type domain.

This sequence belongs to the bacterial ring-hydroxylating dioxygenase ferredoxin reductase family. As to quaternary structure, the propane 2-monooxygenase multicomponent enzyme system is composed of an electron transfer component and a monooxygenase component interacting with the effector protein PrmD. The electron transfer component is composed of a reductase (PrmB), and the monooxygenase component is formed by a large subunit (PrmA) and a small subunit (PrmC). FAD is required as a cofactor. It depends on [2Fe-2S] cluster as a cofactor.

Functionally, reductase component of the propane 2-monooxygenase multicomponent enzyme system which is involved in the degradation of propane via the O2-dependent hydroxylation of propane. Reductase catalyzes the transfer of electrons from NADH or NADPH to monooxygenase. The polypeptide is Propane 2-monooxygenase, reductase component (Gordonia sp. (strain TY-5)).